The sequence spans 334 residues: S-adenosylmethionine:tRNA ribosyltransferase-isomerase (334 aa).

Belongs to the QueA family. In terms of assembly, monomer.

The protein localises to the cytoplasm. The enzyme catalyses 7-aminomethyl-7-carbaguanosine(34) in tRNA + S-adenosyl-L-methionine = epoxyqueuosine(34) in tRNA + adenine + L-methionine + 2 H(+). Its pathway is tRNA modification; tRNA-queuosine biosynthesis. Transfers and isomerizes the ribose moiety from AdoMet to the 7-aminomethyl group of 7-deazaguanine (preQ1-tRNA) to give epoxyqueuosine (oQ-tRNA). This chain is S-adenosylmethionine:tRNA ribosyltransferase-isomerase, found in Aquifex aeolicus (strain VF5).